Here is a 1039-residue protein sequence, read N- to C-terminus: FHIP family protein GG24907 (1039 aa).

2 positions are modified to phosphoserine: Ser498 and Ser805. Disordered stretches follow at residues 831–877, 904–945, and 957–984; these read ATPT…SASS, GISQ…SNSS, and SNTT…SEPA. Polar residues-rich tracts occupy residues 855-877 and 904-924; these read TSMF…SASS and GISQ…TQPQ. Low complexity predominate over residues 925–945; that stretch reads AGASRTGATATSAAASGSNSS. The segment covering 957 to 966 has biased composition (polar residues); sequence SNTTTHSAST.

Belongs to the FHIP family.

In Drosophila erecta (Fruit fly), this protein is FHIP family protein GG24907.